The chain runs to 400 residues: Glycerol-3-phosphate dehydrogenase [NAD(+)] 1 (400 aa).

NAD(+) is bound by residues 50–55, Phe138, Lys161, and Ala194; that span reads GSGNWG. Lys161 provides a ligand contact to substrate. Lys254 acts as the Proton acceptor in catalysis. NAD(+)-binding residues include Arg319 and Gln348. 319 to 320 is a substrate binding site; sequence RN.

The protein belongs to the NAD-dependent glycerol-3-phosphate dehydrogenase family.

It catalyses the reaction sn-glycerol 3-phosphate + NAD(+) = dihydroxyacetone phosphate + NADH + H(+). The protein is Glycerol-3-phosphate dehydrogenase [NAD(+)] 1 (GPD1) of Candida glabrata (strain ATCC 2001 / BCRC 20586 / JCM 3761 / NBRC 0622 / NRRL Y-65 / CBS 138) (Yeast).